We begin with the raw amino-acid sequence, 323 residues long: MASEGLAGALASVLAGQGSSVHSCDSAPAGEPPAPVRLRKNVCYVVLAVFLSEQDEVLLIQEAKRECRGSWYLPAGRMEPGETIVEALQREVKEEAGLHCEPETLLSVEERGPSWVRFVFLARPTGGILKTSKEADAESLQAAWYPRTSLPTPLRAHDILHLVELAAQYRQQARHPLILPQELPCDLVCQRLVATFTSAQTVWVLVGTVGMPHLPVTACGLDPMEQRGGMKMAVLRLLQECLTLHHLVVEIKGLLGLQHLGRDHSDGICLNVLVTVAFRSPGIQDEPPKVRGENFSWWKVMEEDLQSQLLQRLQGSSVVPVNR.

The Nudix hydrolase domain occupies 37-167; the sequence is RLRKNVCYVV…DILHLVELAA (131 aa). Mg(2+) is bound at residue Leu58. The Nudix box motif lies at 76 to 97; the sequence is GRMEPGETIVEALQREVKEEAG.

This sequence belongs to the Nudix hydrolase family. Requires Mn(2+) as cofactor. Mg(2+) is required as a cofactor.

It catalyses the reaction 8-oxo-dGDP + H2O = 8-oxo-dGMP + phosphate + H(+). The enzyme catalyses 8-oxo-dADP + H2O = 8-oxo-dAMP + phosphate + H(+). It carries out the reaction 2-oxo-dADP + H2O = 2-oxo-dAMP + phosphate + H(+). The catalysed reaction is 8-oxo-GDP + H2O = 8-oxo-GMP + phosphate + H(+). Its function is as follows. Mediates the hydrolysis of oxidized nucleoside diphosphate derivatives. Hydrolyzes 8-oxo-7,8-dihydroguanine (8-oxo-Gua)-containing deoxyribo- and ribonucleoside diphosphates to the monophosphates. Hydrolyzes 8-oxo-dGDP and 8-oxo-GDP with the same efficiencies. Also hydrolyzes 8-OH-dADP and 2-OH-dADP. Exhibited no or minimal hydrolysis activity against 8-oxo-dGTP, 8-oxo-GTP, dGTP, GTP, dGDP and GDP. Probably removes oxidized guanine nucleotides from both the DNA and RNA precursor pools. This chain is 8-oxo-dGDP phosphatase NUDT18, found in Homo sapiens (Human).